Reading from the N-terminus, the 731-residue chain is MSRRSQRLTRYSQDDNDGGSSSSGASSVAGSQGTVFKDSPLRTLKRKSSNMKHLSPAPQLGPSSDSHTSYYSESVVRESYIGSPRAVSLARSALLDDHLHSEPYWSGDLRGRRRRGTGGSESSKANGLTAESKASEDFFGSSSGYSSEDDLAGYTDSDQHSSGSRLRSAASRAGSFVWTLVTFPGRLFGLLYWWIGTTWYRLTTAASLLDVFVLTRSRHFSLNLKSFLWFLLLLLLLTGLTYGAWHFYPLGLQTLQPAVVSWWAAKESRKQPEVWESRDASQHFQAEQRVLSRVHSLERRLEALAADFSSNWQKEAIRLERLELRQGAAGHGGGSSLSHEDALSLLEGLVSRREATLKEDLRRDTVAHIQEELATLRAEHHQDSEDLFKKIVQASQESEARVQQLKTEWKSMTQEAFQESSVKELGRLEAQLASLRQELAALTLKQNSVADEVGLLPQKIQAARADVESQFPDWIRQFLLGDRGARSGLLQRDEMHAQLQELENKILTKMAEMQGKSAREAAASLGQILQKEGIVGVTEEQVHRIVKQALQRYSEDRIGMVDYALESGGASVISTRCSETYETKTALLSLFGIPLWYHSQSPRVILQPDVHPGNCWAFQGPQGFAVVRLSARIRPTAVTLEHVPKALSPNSTISSAPKDFAIFGFDEDLQQEGTLLGTFAYDQDGEPIQTFYFQASKMATYQVVELRILTNWGHPEYTCIYRFRVHGEPAH.

Disordered stretches follow at residues 1 to 69 and 106 to 142; these read MSRR…SHTS and SGDL…FGSS. The segment at 1 to 128 is LMNA-binding; the sequence is MSRRSQRLTR…GSESSKANGL (128 aa). Residues 1-226 lie on the Nuclear side of the membrane; it reads MSRRSQRLTR…SRHFSLNLKS (226 aa). S12 is modified (phosphoserine). The span at 18–33 shows a compositional bias: low complexity; that stretch reads GGSSSSGASSVAGSQG. A phosphoserine mark is found at S39 and S55. T117 carries the phosphothreonine modification. Residues S120, S123, and S147 each carry the phosphoserine modification. A helical transmembrane segment spans residues 227 to 247; that stretch reads FLWFLLLLLLLTGLTYGAWHF. Topologically, residues 248–731 are perinuclear space; the sequence is YPLGLQTLQP…RFRVHGEPAH (484 aa). 2 coiled-coil regions span residues 396-452 and 486-519; these read QESE…VADE and RSGL…KSAR. Residues 521–731 form a sufficient for interaction with SYNE1 and SYNE2 region; the sequence is AAASLGQILQ…RFRVHGEPAH (211 aa). Residues 569 to 730 enclose the SUN domain; sequence GASVISTRCS…YRFRVHGEPA (162 aa). Residue N650 is glycosylated (N-linked (GlcNAc...) asparagine).

Core component of the LINC complex which is composed of inner nuclear membrane SUN domain-containing proteins coupled to outer nuclear membrane KASH domain-containing nesprins. SUN and KASH domain-containing proteins seem to bind each other promiscuously; however, differentially expression of LINC complex constituents is giving rise to specific assemblies. At least SUN1/2-containing core LINC complexes are proposed to be hexameric composed of three protomers of each KASH and SUN domain-containing protein. Interacts with SYNE2; the SUN2:SYNE2/KASH2 LINC complex is a heterohexamer; the homotrimeric cloverleave-like conformation of the SUN domain is a prerequisite for LINC complex formation in which three separate SYNE2/KASH2 peptides bind at the interface of adjacent SUN domains. Component of a probable SUN2:KASH5 LINC complex. Interacts with SYNE1 and SYNE3; probably forming respective LINC complexes. Interacts with A-type lamin. Interaction with lamins B1 and C is hardly detectable. Interacts with EMD. Interacts with RAB5A. Interacts with TMEM43 and TMEM201. Interacts with IRAG2. In terms of processing, the disulfide bond with SYNE2 is required for stability of the SUN2:SYNE2/KASH2 LINC complex under tensile forces though not required for the interaction. The disulfide bond is proposed to be conserved in LINC complexes involved in force transmission. As to expression, highly expressed in heart, placenta and muscle.

The protein resides in the nucleus inner membrane. It is found in the nucleus envelope. It localises to the endosome membrane. Its function is as follows. As a component of the LINC (LInker of Nucleoskeleton and Cytoskeleton) complex, involved in the connection between the nuclear lamina and the cytoskeleton. The nucleocytoplasmic interactions established by the LINC complex play an important role in the transmission of mechanical forces across the nuclear envelope and in nuclear movement and positioning. Specifically, SYNE2 and SUN2 assemble in arrays of transmembrane actin-associated nuclear (TAN) lines which are bound to F-actin cables and couple the nucleus to retrograde actin flow during actin-dependent nuclear movement. Required for interkinetic nuclear migration (INM) and essential for nucleokinesis and centrosome-nucleus coupling during radial neuronal migration in the cerebral cortex and during glial migration. Required for nuclear migration in retinal photoreceptor progenitors implicating association with cytoplasmic dynein-dynactin and kinesin motor complexes, and probably B-type lamins; SUN1 and SUN2 seem to act redundantly. The SUN1/2:KASH5 LINC complex couples telomeres to microtubules during meiosis; SUN1 and SUN2 seem to act at least partial redundantly. Anchors chromosome movement in the prophase of meiosis and is involved in selective gene expression of coding and non-coding RNAs needed for gametogenesis. Required for telomere attachment to nuclear envelope and gametogenesis. May also function on endocytic vesicles as a receptor for Rab5-GDP and participate in the activation of Rab5. This is SUN domain-containing protein 2 from Mus musculus (Mouse).